Reading from the N-terminus, the 249-residue chain is uncharacterized protein (249 aa).

The S4 RNA-binding domain maps to 4–71 (VRINKFLSEA…RKRYIILNKP (68 aa)). Aspartate 106 serves as the catalytic Nucleophile.

It belongs to the pseudouridine synthase RsuA family.

The enzyme catalyses a uridine in RNA = a pseudouridine in RNA. This is an uncharacterized protein from Aquifex aeolicus (strain VF5).